The following is a 526-amino-acid chain: Probable feruloyl esterase B-2 (526 aa).

Residues 1–18 (MTKLSLLPLLALASAVLA) form the signal peptide. 2 cysteine pairs are disulfide-bonded: Cys27–Cys74 and Cys62–Cys113. N-linked (GlcNAc...) asparagine glycosylation is found at Asn52, Asn97, and Asn137. Cystine bridges form between Cys186–Cys441, Cys255–Cys272, Cys281–Cys291, and Cys503–Cys525. Ser187 serves as the catalytic Acyl-ester intermediate. Asn233 carries N-linked (GlcNAc...) asparagine glycosylation. Residues Asp256, Asp259, Ala261, Asp263, and Ile265 each coordinate Ca(2+). Residue Asn311 is glycosylated (N-linked (GlcNAc...) asparagine). Catalysis depends on charge relay system residues Asp400 and His440. Asn516 is a glycosylation site (N-linked (GlcNAc...) asparagine).

It belongs to the tannase family.

Its subcellular location is the secreted. It carries out the reaction feruloyl-polysaccharide + H2O = ferulate + polysaccharide.. Involved in degradation of plant cell walls. Hydrolyzes the feruloyl-arabinose ester bond in arabinoxylans as well as the feruloyl-galactose and feruloyl-arabinose ester bonds in pectin. This Neosartorya fischeri (strain ATCC 1020 / DSM 3700 / CBS 544.65 / FGSC A1164 / JCM 1740 / NRRL 181 / WB 181) (Aspergillus fischerianus) protein is Probable feruloyl esterase B-2 (faeB-2).